Consider the following 50-residue polypeptide: Putative protein HokF (50 aa).

A helical membrane pass occupies residues 5-25 (YALVAVIVLCLTVPGFTLLVG).

The protein belongs to the Hok/Gef family.

It is found in the cell inner membrane. Toxic component of a type I toxin-antitoxin (TA) system. When overexpressed kills cells within minutes; causes collapse of the transmembrane potential and arrest of respiration. Its toxic effect is probably neutralized by an antisense antitoxin Sok RNA. The sequence is that of Putative protein HokF (hokF) from Escherichia coli O157:H7.